The sequence spans 79 residues: Polcalcin Bra r 1 (79 aa).

2 consecutive EF-hand domains span residues 1–36 (MADA…LGSV) and 39–71 (DDVT…NPGL). Asp14, Asp16, Asp18, Lys20, Glu25, Asp49, Asp51, Asp53, Asn55, and Glu60 together coordinate Ca(2+).

The protein is Polcalcin Bra r 1 of Brassica campestris (Field mustard).